The chain runs to 37 residues: Large ribosomal subunit protein bL36 (37 aa).

Belongs to the bacterial ribosomal protein bL36 family.

The sequence is that of Large ribosomal subunit protein bL36 from Nostoc punctiforme (strain ATCC 29133 / PCC 73102).